The primary structure comprises 125 residues: Small ribosomal subunit protein eS6 (125 aa).

Positions 90–109 (KGPGFRPKEKGERRKKTVRG) are disordered.

Belongs to the eukaryotic ribosomal protein eS6 family. Part of the 30S ribosomal subunit.

The polypeptide is Small ribosomal subunit protein eS6 (Pyrococcus furiosus (strain ATCC 43587 / DSM 3638 / JCM 8422 / Vc1)).